The following is a 144-amino-acid chain: MRLNTLSPAEGAKHAPKRVGRGIGSGLGKTGGRGHKGQKSRSGGGVRRGFEGGQMPLYRRLPKFGFTSRKSFVTAEIRLSDLAYVEGDVIDLNALKAANVVGPQIEFAKLILSGEVNRAVTIRGLRVTKGARAAIESAGGKIEE.

Positions 1 to 53 (MRLNTLSPAEGAKHAPKRVGRGIGSGLGKTGGRGHKGQKSRSGGGVRRGFEGG) are disordered. Gly residues predominate over residues 21 to 31 (RGIGSGLGKTG).

The protein belongs to the universal ribosomal protein uL15 family. As to quaternary structure, part of the 50S ribosomal subunit.

Functionally, binds to the 23S rRNA. The protein is Large ribosomal subunit protein uL15 of Proteus mirabilis (strain HI4320).